The chain runs to 283 residues: 4-diphosphocytidyl-2-C-methyl-D-erythritol kinase (283 aa).

The active site involves Lys-10. An ATP-binding site is contributed by 99–109; the sequence is PMGGGLGGGSS. Residue Asp-141 is part of the active site.

The protein belongs to the GHMP kinase family. IspE subfamily. As to quaternary structure, homodimer.

It carries out the reaction 4-CDP-2-C-methyl-D-erythritol + ATP = 4-CDP-2-C-methyl-D-erythritol 2-phosphate + ADP + H(+). It participates in isoprenoid biosynthesis; isopentenyl diphosphate biosynthesis via DXP pathway; isopentenyl diphosphate from 1-deoxy-D-xylulose 5-phosphate: step 3/6. In terms of biological role, catalyzes the phosphorylation of the position 2 hydroxy group of 4-diphosphocytidyl-2C-methyl-D-erythritol. In Escherichia coli O81 (strain ED1a), this protein is 4-diphosphocytidyl-2-C-methyl-D-erythritol kinase.